We begin with the raw amino-acid sequence, 328 residues long: Naphthalene 1,2-dioxygenase/salicylate 5-hydroxylase systems, ferredoxin--NAD(P)(+), reductase component (328 aa).

In terms of domain architecture, 2Fe-2S ferredoxin-type spans 1-89; the sequence is MELVVEPLNL…DCTIEIPESD (89 aa). C35, C40, C43, and C73 together coordinate [2Fe-2S] cluster. In terms of domain architecture, FAD-binding FR-type spans 96 to 193; it reads ARIVKGTVTA…SGPLGTAYLR (98 aa).

It belongs to the bacterial ring-hydroxylating dioxygenase ferredoxin reductase family. Ferredoxin reductase NagAa belongs to both the salicylate 5-hydroxylase (S5H) and the naphthalene 1,2-dioxygenase (NDO) multicomponent enzyme systems. The NDO multicomponent enzyme system is composed of an electron transfer component and a dioxygenase component (iron sulfur protein (ISP)). The electron transfer component is composed of a ferredoxin reductase (NagAa) and a ferredoxin (NagAb), and the dioxygenase component is formed by a large alpha subunit (NagAc) and a small beta subunit (NagAd). The S5H multicomponent enzyme system is composed of an electron transfer component and a monooxygenase component. The electron transfer component is comprised of a ferredoxin reductase (NagAa) and a ferredoxin (NagAb), and the monooxygenase component is formed by a large subunit (NagG) and a small subunit (NagH). [2Fe-2S] cluster serves as cofactor. It depends on FAD as a cofactor.

The catalysed reaction is 2 reduced [2Fe-2S]-[ferredoxin] + NAD(+) + H(+) = 2 oxidized [2Fe-2S]-[ferredoxin] + NADH. It catalyses the reaction 2 reduced [2Fe-2S]-[ferredoxin] + NADP(+) + H(+) = 2 oxidized [2Fe-2S]-[ferredoxin] + NADPH. It functions in the pathway aromatic compound metabolism; naphthalene degradation. Its function is as follows. Component of two multicomponent enzyme systems which are involved in the catabolism of naphthalene. Plays a role as an electron transfer component for both salicylate 5-hydroxylase (S5H) and naphthalene 1,2-dioxygenase (NDO) systems, by transferring electrons from NAD(P)H to the oxygenase component via the ferredoxin NagAb. The electron transport chain from the two systems can use both NADH and NADPH as electron donors at approximately similar rates. In Ralstonia sp, this protein is Naphthalene 1,2-dioxygenase/salicylate 5-hydroxylase systems, ferredoxin--NAD(P)(+), reductase component.